The chain runs to 477 residues: Pentatricopeptide repeat-containing protein At5g47360 (477 aa).

9 PPR repeats span residues 129-163 (NVKT…NVCA), 164-198 (DTVA…GLYP), 199-233 (DVIT…DCVL), 234-264 (NSVT…MEKE), 273-307 (NAVT…GCMP), 308-343 (NRVT…GGVS), 344-378 (LSEC…GVRP), 379-413 (DGLA…DVKS), and 416-450 (DSDI…KMRL).

The protein belongs to the PPR family. P subfamily.

The chain is Pentatricopeptide repeat-containing protein At5g47360 from Arabidopsis thaliana (Mouse-ear cress).